A 622-amino-acid chain; its full sequence is Iron transport multicopper oxidase fio1 (622 aa).

An N-terminal signal peptide occupies residues 1–22 (MNKFFSFPILGLLLTCVRFVVA). At 23–553 (KERLFEWNVT…GEMPAGWTSK (531 aa)) the chain is on the extracellular side. 2 N-linked (GlcNAc...) asparagine glycosylation sites follow: Asn-30 and Asn-79. 2 Plastocyanin-like domains span residues 49 to 147 (IGVN…FIIN) and 194 to 304 (TGLF…LSYN). His-85 and His-87 together coordinate Cu cation. N-linked (GlcNAc...) asparagine glycosylation is found at Asn-117 and Asn-123. Cu cation is bound by residues His-129 and His-131. N-linked (GlcNAc...) asparagine glycosylation is found at Asn-198, Asn-202, Asn-234, Asn-269, Asn-296, Asn-338, Asn-360, and Asn-376. Residues 386–498 (EPVTYGPYTN…SGLLATFIEA (113 aa)) enclose the Plastocyanin-like 3 domain. 7 residues coordinate Cu cation: His-417, His-420, His-422, His-480, Cys-481, His-482, and His-486. Asn-532 is a glycosylation site (N-linked (GlcNAc...) asparagine). The helical transmembrane segment at 554-574 (AIGTMAACVISACIGMGSIIF) threads the bilayer. Residues 575–622 (YGASIHPVPTEELDENDDLQEAALENAAMFLDTDKAVEKVVEGKDEIK) lie on the Cytoplasmic side of the membrane.

Belongs to the multicopper oxidase family. The cofactor is Cu cation.

It is found in the cell membrane. Could be an iron transport multicopper oxidase, which is required for Fe(2+) high affinity uptake. May be required to oxidize Fe(2+) and release it from the transporter. Essential component of copper-dependent iron transport. The protein is Iron transport multicopper oxidase fio1 (fio1) of Schizosaccharomyces pombe (strain 972 / ATCC 24843) (Fission yeast).